The primary structure comprises 94 residues: DNA-binding protein HU (94 aa).

This sequence belongs to the bacterial histone-like protein family. As to quaternary structure, homodimer.

Functionally, histone-like DNA-binding protein which is capable of wrapping DNA to stabilize it, and thus to prevent its denaturation under extreme environmental conditions. This is DNA-binding protein HU (hup) from Helicobacter pylori (strain J99 / ATCC 700824) (Campylobacter pylori J99).